A 189-amino-acid polypeptide reads, in one-letter code: Probable DNA-directed RNA polymerase subunit delta (189 aa).

Residues Leu14–Trp81 enclose the HTH HARE-type domain. Acidic residues-rich tracts occupy residues Glu90–Glu100 and Glu118–Glu189. The segment at Glu90 to Glu189 is disordered.

This sequence belongs to the RpoE family. RNAP is composed of a core of 2 alpha, a beta and a beta' subunits. The core is associated with a delta subunit and one of several sigma factors.

Its function is as follows. Participates in both the initiation and recycling phases of transcription. In the presence of the delta subunit, RNAP displays an increased specificity of transcription, a decreased affinity for nucleic acids, and an increased efficiency of RNA synthesis because of enhanced recycling. The sequence is that of Probable DNA-directed RNA polymerase subunit delta from Lactobacillus delbrueckii subsp. bulgaricus (strain ATCC BAA-365 / Lb-18).